The sequence spans 314 residues: Galectin-12 (314 aa).

2 consecutive Galectin domains span residues 27-161 and 190-314; these read YGTT…VGFL and CSRA…CVHC.

Its subcellular location is the nucleus. In terms of biological role, binds lactose. May participate in the apoptosis of adipocytes. This Mus musculus (Mouse) protein is Galectin-12 (Lgals12).